The primary structure comprises 415 residues: Pectin acetylesterase 12 (415 aa).

The first 20 residues, 1–20, serve as a signal peptide directing secretion; sequence MVKLLLVGFVVAGIILGTQA. N-linked (GlcNAc...) asparagine glycosylation is present at N27. Catalysis depends on charge relay system residues S197, D293, and H360.

This sequence belongs to the pectinacetylesterase family.

Its subcellular location is the secreted. The protein resides in the cell wall. Its function is as follows. Hydrolyzes acetyl esters in homogalacturonan regions of pectin. In type I primary cell wall, galacturonic acid residues of pectin can be acetylated at the O-2 and O-3 positions. Decreasing the degree of acetylation of pectin gels in vitro alters their physical properties. The polypeptide is Pectin acetylesterase 12 (Arabidopsis thaliana (Mouse-ear cress)).